We begin with the raw amino-acid sequence, 367 residues long: Aflatoxin B1 aldehyde reductase member 2 (367 aa).

The N-terminal 46 residues, 1 to 46 (MLRAVSRAVSRAAVRCAWRSGPSVARPLAMSRSPAPRAVSGAPLRP), are a transit peptide targeting the mitochondrion. Positions 27–46 (PLAMSRSPAPRAVSGAPLRP) are disordered. S40 carries the phosphoserine modification. At T48 the chain carries Phosphothreonine. NADP(+) is bound at residue D80. Residue Y85 is the Proton donor of the active site. N6-acetyllysine is present on K136. H149 lines the substrate pocket. NADP(+)-binding positions include 179–180 (SN), Q205, 234–244 (NPLAGGLLTGK), and R258. K244 carries the post-translational modification N6-succinyllysine. S263 carries the post-translational modification Phosphoserine. Positions 268 and 271 each coordinate substrate. NADP(+) is bound at residue 326–334 (SSLEQLEQN). Residue R367 coordinates substrate.

The protein belongs to the aldo/keto reductase family. Aldo/keto reductase 2 subfamily. As to quaternary structure, homodimer. Heterodimer with AKR7A1.

Its subcellular location is the mitochondrion. The protein resides in the golgi apparatus. The protein localises to the golgi stack. It localises to the cytoplasm. It catalyses the reaction 4-hydroxybutanoate + NADP(+) = succinate semialdehyde + NADPH + H(+). In terms of biological role, catalyzes the NADPH-dependent reduction of succinic semialdehyde to gamma-hydroxybutyrate. May have an important role in producing the neuromodulator gamma-hydroxybutyrate (GHB). Has broad substrate specificity. Can reduce the dialdehyde protein-binding form of aflatoxin B1 (AFB1) to the non-binding AFB1 dialcohol. Acts as a 2-carboxybenzaldehyde reductase. This Rattus norvegicus (Rat) protein is Aflatoxin B1 aldehyde reductase member 2 (Akr7a2).